The sequence spans 185 residues: Peptidyl-tRNA hydrolase (185 aa).

TRNA is bound at residue Tyr-14. His-19 functions as the Proton acceptor in the catalytic mechanism. Residues Tyr-65, Asn-67, and Asn-113 each coordinate tRNA.

Belongs to the PTH family. Monomer.

The protein resides in the cytoplasm. The catalysed reaction is an N-acyl-L-alpha-aminoacyl-tRNA + H2O = an N-acyl-L-amino acid + a tRNA + H(+). Functionally, hydrolyzes ribosome-free peptidyl-tRNAs (with 1 or more amino acids incorporated), which drop off the ribosome during protein synthesis, or as a result of ribosome stalling. In terms of biological role, catalyzes the release of premature peptidyl moieties from peptidyl-tRNA molecules trapped in stalled 50S ribosomal subunits, and thus maintains levels of free tRNAs and 50S ribosomes. In Rickettsia africae (strain ESF-5), this protein is Peptidyl-tRNA hydrolase.